The sequence spans 145 residues: Large ribosomal subunit protein uL15 (145 aa).

The disordered stretch occupies residues 1 to 52 (MKLNTIAPAEGSKKDRRRVGRGIGSGFGKTAGRGHKGQHARSGGYHKVGFEG). The segment covering 21-31 (RGIGSGFGKTA) has biased composition (gly residues).

This sequence belongs to the universal ribosomal protein uL15 family. As to quaternary structure, part of the 50S ribosomal subunit.

In terms of biological role, binds to the 23S rRNA. This is Large ribosomal subunit protein uL15 from Acidithiobacillus ferrooxidans (strain ATCC 53993 / BNL-5-31) (Leptospirillum ferrooxidans (ATCC 53993)).